Here is a 434-residue protein sequence, read N- to C-terminus: Nicotinate phosphoribosyltransferase (434 aa).

Position 242 is a phosphohistidine; by autocatalysis (His242).

This sequence belongs to the NAPRTase family. Post-translationally, transiently phosphorylated on a His residue during the reaction cycle. Phosphorylation strongly increases the affinity for substrates and increases the rate of nicotinate D-ribonucleotide production. Dephosphorylation regenerates the low-affinity form of the enzyme, leading to product release.

The catalysed reaction is nicotinate + 5-phospho-alpha-D-ribose 1-diphosphate + ATP + H2O = nicotinate beta-D-ribonucleotide + ADP + phosphate + diphosphate. The protein operates within cofactor biosynthesis; NAD(+) biosynthesis; nicotinate D-ribonucleotide from nicotinate: step 1/1. Functionally, catalyzes the synthesis of beta-nicotinate D-ribonucleotide from nicotinate and 5-phospho-D-ribose 1-phosphate at the expense of ATP. In Nitrobacter hamburgensis (strain DSM 10229 / NCIMB 13809 / X14), this protein is Nicotinate phosphoribosyltransferase.